The sequence spans 165 residues: 2-halobenzoate 1,2-dioxygenase small subunit (165 aa).

It belongs to the bacterial ring-hydroxylating dioxygenase beta subunit family. As to quaternary structure, heterohexamer of 3 large (CbdA) subunits and 3 small (CbdB) subunits. The heterohexamer is part of 2-halobenzoate dioxygenase two component enzyme system. The other component is a NADH:acceptor reductase (CdbC).

It carries out the reaction a 2-halobenzoate + NADH + O2 + H(+) = a halide anion + catechol + CO2 + NAD(+). It participates in xenobiotic degradation; benzoate degradation via CoA ligation. In terms of biological role, component of 2-halobenzoate dioxygenase multicomponent enzyme system which catalyzes the incorporation of both atoms of molecular oxygen into 2-halobenzoate to form catechol. This Burkholderia cepacia (Pseudomonas cepacia) protein is 2-halobenzoate 1,2-dioxygenase small subunit (cbdB).